Reading from the N-terminus, the 464-residue chain is L-cystine uptake protein TcyP (464 aa).

Transmembrane regions (helical) follow at residues 3-23 (TLLVGINVAVMLILVGVLYYM), 34-54 (VFTALGVGILFGLILQFIYEP), 73-93 (YVKLLQMIVMPLILVSIISAF), 107-127 (GLIIGILILTTGIAAAVGIAA), 184-204 (PTSTISVVIFAAFIGIAFIGV), 225-245 (IVMRMVTLILRLTPYGVLALM), 263-283 (FVLASYVALIVMFIIHLLLIA), 347-367 (AGIYPAMLAMMVAPTVGIDPL), 371-391 (FILTLIAVVAISSFGVAGVGG), and 395-415 (FAALIVLSTMNLPIGIVALVI).

Belongs to the dicarboxylate/amino acid:cation symporter (DAACS) (TC 2.A.23) family.

It is found in the membrane. Mediates uptake of L-cystine, the oxidized form of L-cysteine. The chain is L-cystine uptake protein TcyP from Bacillus cereus (strain ATCC 14579 / DSM 31 / CCUG 7414 / JCM 2152 / NBRC 15305 / NCIMB 9373 / NCTC 2599 / NRRL B-3711).